The following is a 55-amino-acid chain: Large ribosomal subunit protein bL33 (55 aa).

It belongs to the bacterial ribosomal protein bL33 family.

The chain is Large ribosomal subunit protein bL33 from Acidothermus cellulolyticus (strain ATCC 43068 / DSM 8971 / 11B).